We begin with the raw amino-acid sequence, 264 residues long: MGLLSVDLLITLQILPGFFSNCLFLALYDSVVLVKHVLLQLNRSKSSHGQWRRMLTPEGLRCVWNSFLLDAYKQVKLGGDAPNSNVIHVTDKNSSSGKPGTPCHLLDFASSERPLVVNFGSATUPPFISQLPAFSKMVEEFSAVADFLLVYIDEAHPSDGWAAPGISSYEVKKHRNQEDRCAAANKLLEQYSLPPQCQVVADCMDNNTNAAYGVSFERVCIVQRQKIVYLGGKGPFFYNLQEVRQWLELTFGKKAESGQTGTEK.

The Lumenal segment spans residues 1–7 (MGLLSVD). The chain crosses the membrane as a helical; Signal-anchor for type III membrane protein span at residues 8–28 (LLITLQILPGFFSNCLFLALY). The Cytoplasmic segment spans residues 29 to 264 (DSVVLVKHVL…AESGQTGTEK (236 aa)). Residue U124 is part of the active site. U124 is a non-standard amino acid (selenocysteine).

Belongs to the iodothyronine deiodinase family. As to quaternary structure, predominantly monomer. Can form homodimers but homodimerization is not essential for enzyme activity. In terms of tissue distribution, high levels seen in the metamorphosing tail.

Its subcellular location is the endoplasmic reticulum membrane. It carries out the reaction 3,3',5-triiodo-L-thyronine + iodide + A + H(+) = L-thyroxine + AH2. The enzyme catalyses 3,3'-diiodo-L-thyronine + iodide + A + H(+) = 3,3',5'-triiodo-L-thyronine + AH2. It catalyses the reaction 3'-iodo-L-thyronine + iodide + A + H(+) = 3',5'-diiodo-L-thyronine + AH2. The catalysed reaction is 3,3'-diiodothyronamine + iodide + A + H(+) = 3,3',5'-triiodothyronamine + AH2. It carries out the reaction 3'-iodothyronamine + iodide + A + H(+) = 3',5'-diiodothyronamine + AH2. Not inhibited by N(6)-propylthiouracil. Functionally, plays a crucial role in the metabolism of thyroid hormones (TH) and has specific roles in TH activation and inactivation by deiodination. Catalyzes the deiodination of L-thyroxine (T4) to 3,5,3'-triiodothyronine (T3) and 3',5'-diiodothyronine (3',5'-T2) to 3'-monoiodothyronine (3'-T1) via outer-ring deiodination (ORD). Catalyzes the deiodination of 3,3',5'-triiodothyronine (rT3) to 3,3'-diiodothyronine (3,3'-T2) via ORD. Catalyzes the phenolic ring deiodinations of 3,3',5'-triiodothyronamine and 3',5'- diiodothyronamine. The polypeptide is Type II iodothyronine deiodinase (dio2) (Aquarana catesbeiana (American bullfrog)).